Consider the following 404-residue polypeptide: Cysteine desulfurase IscS (404 aa).

Pyridoxal 5'-phosphate-binding positions include 75-76 (AT), N155, Q183, and 203-205 (SGH). N6-(pyridoxal phosphate)lysine is present on K206. T243 contacts pyridoxal 5'-phosphate. C328 acts as the Cysteine persulfide intermediate in catalysis. C328 is a [2Fe-2S] cluster binding site.

The protein belongs to the class-V pyridoxal-phosphate-dependent aminotransferase family. NifS/IscS subfamily. Homodimer. Forms a heterotetramer with IscU, interacts with other sulfur acceptors. Pyridoxal 5'-phosphate serves as cofactor.

It localises to the cytoplasm. It carries out the reaction (sulfur carrier)-H + L-cysteine = (sulfur carrier)-SH + L-alanine. Its pathway is cofactor biosynthesis; iron-sulfur cluster biosynthesis. Its function is as follows. Master enzyme that delivers sulfur to a number of partners involved in Fe-S cluster assembly, tRNA modification or cofactor biosynthesis. Catalyzes the removal of elemental sulfur atoms from cysteine to produce alanine. Functions as a sulfur delivery protein for Fe-S cluster synthesis onto IscU, an Fe-S scaffold assembly protein, as well as other S acceptor proteins. In Shewanella oneidensis (strain ATCC 700550 / JCM 31522 / CIP 106686 / LMG 19005 / NCIMB 14063 / MR-1), this protein is Cysteine desulfurase IscS.